The chain runs to 152 residues: SsrA-binding protein (152 aa).

This sequence belongs to the SmpB family.

It localises to the cytoplasm. In terms of biological role, required for rescue of stalled ribosomes mediated by trans-translation. Binds to transfer-messenger RNA (tmRNA), required for stable association of tmRNA with ribosomes. tmRNA and SmpB together mimic tRNA shape, replacing the anticodon stem-loop with SmpB. tmRNA is encoded by the ssrA gene; the 2 termini fold to resemble tRNA(Ala) and it encodes a 'tag peptide', a short internal open reading frame. During trans-translation Ala-aminoacylated tmRNA acts like a tRNA, entering the A-site of stalled ribosomes, displacing the stalled mRNA. The ribosome then switches to translate the ORF on the tmRNA; the nascent peptide is terminated with the 'tag peptide' encoded by the tmRNA and targeted for degradation. The ribosome is freed to recommence translation, which seems to be the essential function of trans-translation. In Rickettsia rickettsii, this protein is SsrA-binding protein.